The following is a 313-amino-acid chain: Ribosomal RNA small subunit methyltransferase H (313 aa).

S-adenosyl-L-methionine-binding positions include 35–37 (GGH), Asp-55, Phe-79, Asp-101, and Gln-108.

Belongs to the methyltransferase superfamily. RsmH family.

The protein localises to the cytoplasm. It catalyses the reaction cytidine(1402) in 16S rRNA + S-adenosyl-L-methionine = N(4)-methylcytidine(1402) in 16S rRNA + S-adenosyl-L-homocysteine + H(+). Specifically methylates the N4 position of cytidine in position 1402 (C1402) of 16S rRNA. The protein is Ribosomal RNA small subunit methyltransferase H of Escherichia coli O139:H28 (strain E24377A / ETEC).